A 452-amino-acid chain; its full sequence is Asparagine--tRNA ligase (452 aa).

The protein belongs to the class-II aminoacyl-tRNA synthetase family. Homodimer.

Its subcellular location is the cytoplasm. The catalysed reaction is tRNA(Asn) + L-asparagine + ATP = L-asparaginyl-tRNA(Asn) + AMP + diphosphate + H(+). This is Asparagine--tRNA ligase from Mycoplasma mycoides subsp. mycoides SC (strain CCUG 32753 / NCTC 10114 / PG1).